Reading from the N-terminus, the 589-residue chain is Pyruvate kinase (589 aa).

A substrate-binding site is contributed by Arg32. Residues Asn34, Ser36, Asp66, and Thr67 each coordinate K(+). 34 to 37 (NFSH) contacts ATP. 2 residues coordinate ATP: Arg73 and Lys157. Residue Glu223 participates in Mg(2+) binding. Substrate-binding residues include Gly246, Asp247, and Thr279. Mg(2+) is bound at residue Asp247.

Belongs to the pyruvate kinase family. This sequence in the C-terminal section; belongs to the PEP-utilizing enzyme family. Homotetramer. Mg(2+) is required as a cofactor. Requires K(+) as cofactor.

The enzyme catalyses pyruvate + ATP = phosphoenolpyruvate + ADP + H(+). It functions in the pathway carbohydrate degradation; glycolysis; pyruvate from D-glyceraldehyde 3-phosphate: step 5/5. With respect to regulation, strongly activated by glucose-6-phosphate, ribose-5-phosphate and fructose-6-phosphate. Weak activator AMP and weak inhibitor fructose-1,6-bisphosphate can act as strong inhibitors in the presence of strong activators. The polypeptide is Pyruvate kinase (pyk) (Lactobacillus delbrueckii subsp. bulgaricus).